Here is a 146-residue protein sequence, read N- to C-terminus: Allograft inflammatory factor 1 (146 aa).

Ser-1 carries the post-translational modification N-acetylserine. Lys-10 is subject to N6-acetyllysine. Ser-38 bears the Phosphoserine mark. The EF-hand 1 domain occupies 44–79; that stretch reads RKLEAFKQKYMEFDLNGNGDIDIMSLKRMLEKLGVP. 5 residues coordinate Ca(2+): Asp-57, Asn-59, Asn-61, Asp-63, and Thr-99. The region spanning 81-115 is the EF-hand 2; degenerate domain; the sequence is THLELKKLIKEVSSGSGETFSYSIFLKMMLGKRSA. The disordered stretch occupies residues 127–146; it reads AREQEKPTGPPAKKAISELP.

As to quaternary structure, homodimer (Potential). Monomer. Interacts with LCP1. Microglial cells in the central nervous system and dendritic cells and macrophages in several organs.

It localises to the cytoplasm. Its subcellular location is the cytoskeleton. The protein resides in the cell projection. It is found in the ruffle membrane. The protein localises to the phagocytic cup. In terms of biological role, actin-binding protein that enhances membrane ruffling and RAC activation. Enhances the actin-bundling activity of LCP1. Binds calcium. Plays a role in RAC signaling and in phagocytosis. May play a role in macrophage activation and function. Promotes the proliferation of vascular smooth muscle cells and of T-lymphocytes. Enhances lymphocyte migration. Plays a role in vascular inflammation. Has a dual influence on glucose-induced insulin secretion: inhibition at low concentration and stimulation at high concentrations. The sequence is that of Allograft inflammatory factor 1 (AIF1) from Sus scrofa (Pig).